The following is a 42-amino-acid chain: Daisho1 (42 aa).

The first 20 residues, 1–20, serve as a signal peptide directing secretion; sequence MKFFQAAALLLAMFAALANA. The propeptide at 21–26 is removed by a dipeptidylpeptidase; sequence EPVPQP. Threonine 41 carries the post-translational modification Threonine amide.

As to expression, hemolymph (at protein level).

It is found in the secreted. Peptide which plays a role in the humoral immune response to a subset of filamentous fungi, including F.oxysporum and F.verticillioides. This chain is Daisho1, found in Drosophila melanogaster (Fruit fly).